Reading from the N-terminus, the 321-residue chain is Protoheme IX farnesyltransferase (321 aa).

Transmembrane regions (helical) follow at residues 28–48, 49–69, 94–114, 116–136, 149–169, 176–196, 222–242, 247–267, 277–297, and 300–320; these read VMSL…DPVH, PIVG…SGAL, VMPN…VFTL, IVAN…YVVI, IVIG…AATG, FILF…LALG, ILLY…LGFA, GMLS…VYIV, AKAL…EIVV, and LVPI…PGFF.

This sequence belongs to the UbiA prenyltransferase family. Protoheme IX farnesyltransferase subfamily.

It localises to the cell inner membrane. The enzyme catalyses heme b + (2E,6E)-farnesyl diphosphate + H2O = Fe(II)-heme o + diphosphate. It functions in the pathway porphyrin-containing compound metabolism; heme O biosynthesis; heme O from protoheme: step 1/1. In terms of biological role, converts heme B (protoheme IX) to heme O by substitution of the vinyl group on carbon 2 of heme B porphyrin ring with a hydroxyethyl farnesyl side group. This is Protoheme IX farnesyltransferase from Beijerinckia indica subsp. indica (strain ATCC 9039 / DSM 1715 / NCIMB 8712).